A 239-amino-acid polypeptide reads, in one-letter code: Ribonuclease HII (239 aa).

Positions 30–221 (GPVAGVDEVG…VRRLVTAGTP (192 aa)) constitute an RNase H type-2 domain. A divalent metal cation is bound by residues aspartate 36, glutamate 37, and aspartate 130.

This sequence belongs to the RNase HII family. The cofactor is Mn(2+). Mg(2+) serves as cofactor.

The protein localises to the cytoplasm. It carries out the reaction Endonucleolytic cleavage to 5'-phosphomonoester.. Functionally, endonuclease that specifically degrades the RNA of RNA-DNA hybrids. This chain is Ribonuclease HII, found in Mycobacterium sp. (strain KMS).